Consider the following 328-residue polypeptide: Small ribosomal subunit protein bS1A (328 aa).

S1 motif domains are found at residues 31–100 (GDIV…LSIR), 118–182 (DATV…LSHR), and 196–264 (AQVV…LSTK). The interval 298–328 (EAQGIPYEPPTSVDDTDDEEDESLAVSAVDE) is disordered. Residues 311–328 (DDTDDEEDESLAVSAVDE) show a composition bias toward acidic residues.

The protein belongs to the bacterial ribosomal protein bS1 family.

Functionally, binds mRNA. The chain is Small ribosomal subunit protein bS1A (rps1A) from Synechocystis sp. (strain ATCC 27184 / PCC 6803 / Kazusa).